The sequence spans 342 residues: Metalloendoproteinase 4-MMP (342 aa).

A signal peptide spans methionine 1 to alanine 34. Residues arginine 35–lysine 124 constitute a propeptide, activation peptide. Residues proline 104–aspartate 111 carry the Cysteine switch motif. Zn(2+) contacts are provided by cysteine 106 and histidine 252. The active site involves glutamate 253. Zn(2+) is bound by residues histidine 256 and histidine 262. An N-linked (GlcNAc...) asparagine glycan is attached at asparagine 300. Aspartate 317 is lipidated: GPI-anchor amidated aspartate. Positions glycine 318–tryptophan 342 are cleaved as a propeptide — removed in mature form.

Belongs to the peptidase M10A family. Matrix metalloproteinases (MMPs) subfamily. It depends on Zn(2+) as a cofactor. As to expression, mostly expressed in flowers and stems, and, to a lower extent, in leaves and roots.

Its subcellular location is the cell membrane. Repressed by acetohydroxamic acid (AHA). Functionally, matrix metalloproteinases (MMPs) or matrixins may play a role in the degradation and remodeling of the extracellular matrix (ECM) during development or in response to stresses. Active on myelin basic protein (MBP) and, to some extent, on McaPLGLDpaAR-NH(2) (QF24) and beta-casein. The chain is Metalloendoproteinase 4-MMP from Arabidopsis thaliana (Mouse-ear cress).